We begin with the raw amino-acid sequence, 400 residues long: METHISCLFPELLAMIFGYLDVRDKGRAAQVCTAWRDAAYHKSVWRGVEAKLHLRRANPSLFPSLQARGIRRVQILSLRRSLSYVIQGMANIESLNLSGCYNLTDNGLGHAFVQEIGSLRALNLSLCKQITDSSLGRIAQYLKGLEVLELGGCSNITNTGLLLIAWGLQRLKSLNLRSCRHLSDVGIGHLAGMTRSAAEGCLGLEQLTLQDCQKLTDLSLKHISRGLTGLRLLNLSFCGGISDAGLLHLSHMGSLRSLNLRSCDNISDTGIMHLAMGSLRLSGLDVSFCDKVGDQSLAYIAQGLDGLKSLSLCSCHISDDGINRMVRQMHGLRTLNIGQCVRITDKGLELIAEHLSQLTGIDLYGCTRITKRGLERITQLPCLKVLNLGLWQMTDSEKVR.

Positions 2-48 (ETHISCLFPELLAMIFGYLDVRDKGRAAQVCTAWRDAAYHKSVWRGV) constitute an F-box domain. The interval 2–48 (ETHISCLFPELLAMIFGYLDVRDKGRAAQVCTAWRDAAYHKSVWRGV) is required for down-regulation of SNAI1. 5 LRR repeats span residues 144–163 (GLEVLELGGCSNITNTGLLL), 170–191 (RLKSLNLRSCRHLSDVGIGHLA), 203–225 (GLEQLTLQDCQKLTDLSLKHISR), 229–250 (GLRLLNLSFCGGISDAGLLHLS), and 254–275 (SLRSLNLRSCDNISDTGIMHLA).

In terms of assembly, part of a SCF (SKP1-cullin-F-box) ubiquitin-protein ligase complex. Interacts with SKP1 and CUL1. Interacts with SNAI1; the interaction requires the phosphorylation of the two serine residues in the substrate destruction motif D-S-G-X(2,3,4)-S.

It localises to the cytoplasm. Functionally, substrate-recognition component of some SCF (SKP1-CUL1-F-box protein)-type E3 ubiquitin-protein ligase complexes. The SCF(FBXL14) complex acts by mediating ubiquitination and subsequent degradation of SNAI1. The sequence is that of F-box/LRR-repeat protein 14 (FBXL14) from Bos taurus (Bovine).